The sequence spans 501 residues: 2,3-bisphosphoglycerate-independent phosphoglycerate mutase (501 aa).

Asp-10 and Ser-60 together coordinate Mn(2+). The Phosphoserine intermediate role is filled by Ser-60. Residues His-121, 151–152, Arg-182, Arg-188, 256–259, and Lys-329 each bind substrate; these read RD and RPDR. 5 residues coordinate Mn(2+): Asp-394, His-398, Asp-435, His-436, and His-453.

It belongs to the BPG-independent phosphoglycerate mutase family. In terms of assembly, monomer. Mn(2+) serves as cofactor.

It catalyses the reaction (2R)-2-phosphoglycerate = (2R)-3-phosphoglycerate. It functions in the pathway carbohydrate degradation; glycolysis; pyruvate from D-glyceraldehyde 3-phosphate: step 3/5. Functionally, catalyzes the interconversion of 2-phosphoglycerate and 3-phosphoglycerate. The protein is 2,3-bisphosphoglycerate-independent phosphoglycerate mutase of Mycoplasmopsis synoviae (strain 53) (Mycoplasma synoviae).